Consider the following 131-residue polypeptide: Large ribosomal subunit protein bL19 (131 aa).

The protein belongs to the bacterial ribosomal protein bL19 family.

In terms of biological role, this protein is located at the 30S-50S ribosomal subunit interface and may play a role in the structure and function of the aminoacyl-tRNA binding site. In Afipia carboxidovorans (strain ATCC 49405 / DSM 1227 / KCTC 32145 / OM5) (Oligotropha carboxidovorans), this protein is Large ribosomal subunit protein bL19.